We begin with the raw amino-acid sequence, 234 residues long: Leucyl/phenylalanyl-tRNA--protein transferase (234 aa).

The protein belongs to the L/F-transferase family.

It localises to the cytoplasm. The enzyme catalyses N-terminal L-lysyl-[protein] + L-leucyl-tRNA(Leu) = N-terminal L-leucyl-L-lysyl-[protein] + tRNA(Leu) + H(+). It carries out the reaction N-terminal L-arginyl-[protein] + L-leucyl-tRNA(Leu) = N-terminal L-leucyl-L-arginyl-[protein] + tRNA(Leu) + H(+). It catalyses the reaction L-phenylalanyl-tRNA(Phe) + an N-terminal L-alpha-aminoacyl-[protein] = an N-terminal L-phenylalanyl-L-alpha-aminoacyl-[protein] + tRNA(Phe). Functionally, functions in the N-end rule pathway of protein degradation where it conjugates Leu, Phe and, less efficiently, Met from aminoacyl-tRNAs to the N-termini of proteins containing an N-terminal arginine or lysine. This chain is Leucyl/phenylalanyl-tRNA--protein transferase, found in Shigella sonnei (strain Ss046).